A 714-amino-acid polypeptide reads, in one-letter code: BRCA1-associated RING domain protein 1 (714 aa).

The RING-type zinc-finger motif lies at 25-63 (CPLCLKLLNRPVLLPCDHVFCDSCVHKSSQVESGCPVCK). Disordered stretches follow at residues 106-165 (YKND…QDWT) and 254-283 (KAQNHQQLPKSHTEQDSKRKRDITASDAME). The span at 118 to 134 (KHGESEDSEMTDKDVSK) shows a compositional bias: basic and acidic residues. A compositionally biased stretch (low complexity) spans 135 to 147 (RSGGTDSSSRDGS). Composition is skewed to basic and acidic residues over residues 155–165 (SDPRPKHQDWT) and 264–283 (SHTEQDSKRKRDITASDAME). A C2HC pre-PHD-type zinc finger spans residues 331–382 (ITICGFCQSARVSEATGEMLHYSRGRPVDGDDIFRSNVIHVHSACIEWAPQV). A PHD-type zinc finger spans residues 402–451 (IKCTKCSLKGAALGCFVKSCRRSYHVPCAREISRCRWDYEDFLLLCPAHS). 2 consecutive BRCT domains span residues 482 to 577 (EQTP…PFEI) and 598 to 713 (NKPK…HPVI).

Component of a DNA-protein complex on WUS and WOX5 promoters. Interacts with SYD. Forms heterodimer with BRCA1. In terms of tissue distribution, expressed in the shoot apical meristem (SAM), roots, flowers, embryos and seedlings. Mostly expressed in flowers and siliques, and, to a lower extent, in roots, rosette leaves, inflorescence and young cauline leaves.

Its subcellular location is the nucleus. Binds specifically to H3K4me3 regions of target genes (e.g. WUS and WOX5) promoters to repress their transcription via chromatin remodeling. Required for the shoot apical meristem (SAM) organization and maintenance, by confining WUS expression to the organizing center, and for the quiescent center (QC) development in the root apical meristem (RAM), by repressing WOX5 expression in the root proximal meristem. Plays a role in DNA repair and in cell-cycle control. Required for the repair of DNA double-strand breaks (DSBs), both natural and induced by genotoxic stress, by homologous recombination (HR). The polypeptide is BRCA1-associated RING domain protein 1 (Arabidopsis thaliana (Mouse-ear cress)).